A 103-amino-acid chain; its full sequence is Zinc-containing ferredoxin (103 aa).

The interval 1–36 (GIDPNYRTSKPVVGDHSGHKIYGPVESPKVLGVHGT) is N-terminal extension. Residue H19 coordinates Zn(2+). The residue at position 29 (K29) is an N6-methyllysine. H34 contacts Zn(2+). 2 consecutive 4Fe-4S ferredoxin-type domains span residues 35–65 (GTIV…WYET) and 74–103 (KADP…VKPP). [3Fe-4S] cluster-binding residues include C45 and C51. [4Fe-4S] cluster is bound at residue C55. A Zn(2+)-binding site is contributed by D76. Residues C83, C86, and C89 each coordinate [4Fe-4S] cluster. C93 lines the [3Fe-4S] cluster pocket.

Requires [3Fe-4S] cluster as cofactor. [4Fe-4S] cluster serves as cofactor. The cofactor is Zn(2+).

In terms of biological role, ferredoxins are iron-sulfur proteins that transfer electrons in a wide variety of metabolic reactions. This chain is Zinc-containing ferredoxin (zfx), found in Sulfolobus acidocaldarius (strain ATCC 33909 / DSM 639 / JCM 8929 / NBRC 15157 / NCIMB 11770).